The sequence spans 396 residues: Inositol polyphosphate multikinase (396 aa).

The span at 1-13 shows a compositional bias: low complexity; it reads MAAEPPALRLRPP. Residues 1 to 22 are disordered; it reads MAAEPPALRLRPPGSTGDSPPV. Ala-2 bears the N-acetylalanine mark. At Ser-19 the chain carries Phosphoserine. Lys-58 is an ATP binding site. Residue Arg-65 participates in substrate binding. Residues 114 to 116 and Asp-127 each bind ATP; that span reads EDV. Substrate contacts are provided by residues Lys-129, 143-150, and Gln-179; that span reads KIQQQVSK. The short motif at 300 to 310 is the Nuclear localization signal element; that stretch reads RHRKLYAKKHQ. Position 365 (Asp-365) interacts with ATP.

The protein belongs to the inositol phosphokinase (IPK) family. The cofactor is Mg(2+). As to expression, highly expressed in kidney, and at lower levels in hippocampus, brain cortex, cerebellum, heart and lung.

It localises to the nucleus. It catalyses the reaction 1D-myo-inositol 1,4,5-trisphosphate + 2 ATP = 1D-myo-inositol 1,3,4,5,6-pentakisphosphate + 2 ADP + 2 H(+). The enzyme catalyses 1D-myo-inositol 1,3,4,6-tetrakisphosphate + ATP = 1D-myo-inositol 1,3,4,5,6-pentakisphosphate + ADP + H(+). The catalysed reaction is 1-octadecanoyl-2-(5Z,8Z,11Z,14Z)-eicosatetraenoyl-sn-glycero-3-phospho-1D-myo-inositol 4,5-bisphosphate + ATP = 1-octadecanoyl-2-(5Z,8Z,11Z,14Z-eicosatetraenoyl)-sn-glycero-3-phospho-(1D-myo-inositol 3,4,5-triphosphate) + ADP + H(+). It carries out the reaction a 1,2-diacyl-sn-glycero-3-phospho-(1D-myo-inositol-4,5-bisphosphate) + ATP = a 1,2-diacyl-sn-glycero-3-phospho-(1D-myo-inositol-3,4,5-trisphosphate) + ADP + H(+). It catalyses the reaction 1D-myo-inositol 1,4,5,6-tetrakisphosphate + ATP = 1D-myo-inositol 1,3,4,5,6-pentakisphosphate + ADP + H(+). It functions in the pathway phospholipid metabolism; phosphatidylinositol metabolism. Functionally, inositol phosphate kinase with a broad substrate specificity. Phosphorylates inositol 1,4,5-trisphosphate (Ins(1,4,5)P3) first to inositol 1,3,4,5-tetrakisphosphate and then to inositol 1,3,4,5,6-pentakisphosphate (Ins(1,3,4,5,6)P5). Phosphorylates inositol 1,3,4,6-tetrakisphosphate (Ins(1,3,4,6)P4). Phosphorylates inositol 1,4,5,6-tetrakisphosphate (Ins(1,4,5,6)P4). Phosphorylates glycero-3-phospho-1D-myo-inositol 4,5-bisphosphate to glycero-3-phospho-1D-myo-inositol 3,4,5-trisphosphate. Plays an important role in MLKL-mediated necroptosis via its role in the biosynthesis of inositol pentakisphosphate (InsP5) and inositol hexakisphosphate (InsP6). Binding of these highly phosphorylated inositol phosphates to MLKL mediates the release of an N-terminal auto-inhibitory region, leading to activation of the kinase. Essential for activated phospho-MLKL to oligomerize and localize to the cell membrane during necroptosis. Required for normal embryonic development, probably via its role in the biosynthesis of inositol 1,3,4,5,6-pentakisphosphate (Ins(1,3,4,5,6)P5) and inositol hexakisphosphate (InsP6). This chain is Inositol polyphosphate multikinase (Ipmk), found in Rattus norvegicus (Rat).